A 478-amino-acid chain; its full sequence is Probable serine carboxypeptidase CPVL (478 aa).

A signal peptide spans 1 to 22 (MVRAQWKVIILLILLMVIPSDG). Residues Asn-83 and Asn-134 are each glycosylated (N-linked (GlcNAc...) asparagine). The active site involves Ser-206. N-linked (GlcNAc...) asparagine glycans are attached at residues Asn-309 and Asn-350. Active-site residues include Asp-390 and His-450.

Belongs to the peptidase S10 family.

Functionally, may be involved in the digestion of phagocytosed particles in the lysosome, participation in an inflammatory protease cascade, and trimming of peptides for antigen presentation. The chain is Probable serine carboxypeptidase CPVL (CPVL) from Rattus norvegicus (Rat).